The following is a 437-amino-acid chain: Vasoactive intestinal polypeptide receptor 2 (437 aa).

The first 22 residues, 1 to 22 (MRASVVLTCYCWLLVRVSSIHP), serve as a signal peptide directing secretion. Residues 23–123 (ECRFHLEIQE…EDESKISFYI (101 aa)) lie on the Extracellular side of the membrane. 3 cysteine pairs are disulfide-bonded: cysteine 37–cysteine 60, cysteine 51–cysteine 92, and cysteine 74–cysteine 108. 3 N-linked (GlcNAc...) asparagine glycosylation sites follow: asparagine 57, asparagine 87, and asparagine 91. The chain crosses the membrane as a helical span at residues 124–149 (LVKAIYTLGYSVSLMSLTTGSIIICL). Over 150–157 (FRKLHCTR) the chain is Cytoplasmic. Residues 158-179 (NYIHLNLFLSFMLRAISVLVKD) form a helical membrane-spanning segment. Topologically, residues 180–202 (SVLYSSSGLLRCHDQPASWVGCK) are extracellular. Cysteine 201 and cysteine 270 are disulfide-bonded. Residues 203 to 227 (LSLVFFQYCIMANFYWLLVEGLYLH) traverse the membrane as a helical segment. The Cytoplasmic portion of the chain corresponds to 228–238 (TLLVAILPPSR). The chain crosses the membrane as a helical span at residues 239-260 (CFLAYLLIGWGIPSVCIGAWTA). Residues 261 to 279 (TRLSLEDTGCWDTNDHSIP) lie on the Extracellular side of the membrane. The helical transmembrane segment at 280-303 (WWVIRMPILISIVVNFALFISIVR) threads the bilayer. The Cytoplasmic portion of the chain corresponds to 304–324 (ILLQKLTSPDVGGNDQSQYKR). The chain crosses the membrane as a helical span at residues 325 to 345 (LAKSTLLLIPLFGVHYMVFAA). Topologically, residues 346 to 353 (FPIGISST) are extracellular. Residues 354 to 377 (YQILFELCVGSFQGLVVAVLYCFL) traverse the membrane as a helical segment. At 378–437 (NSEVQCELKRRWRGLCLTQAGSRDYRLHSWSMSRNGSESALQIHRGSRTQSFLQSETSVI) the chain is on the cytoplasmic side.

Belongs to the G-protein coupled receptor 2 family. As to quaternary structure, interacts with ADCYAP1/PACAP (via N-terminal extracellular domain); activated by PACAP27 and CAPAC38 neuropeptides. Interacts with VIP; the interaction results in VIPR1 activation. As to expression, expressed at high levels in the MIN6 cells, at moderate levels in pancreatic islets, insulin-secreting cells, lung, brain, stomach, and colon, and at low levels in the heart.

Its subcellular location is the cell membrane. In terms of biological role, g protein-coupled receptor activated by the neuropeptides vasoactive intestinal peptide (VIP) and pituitary adenylate cyclase-activating polypeptide (ADCYAP1/PACAP). Binds VIP and both PACAP27 and PACAP38 bioactive peptides with the order of ligand affinity of VIP = PACAP38 &gt; PACAP27. Ligand binding causes a conformation change that triggers signaling via guanine nucleotide-binding proteins (G proteins) and modulates the activity of downstream effectors. Activates cAMP-dependent pathway. May be coupled to phospholipase C. The sequence is that of Vasoactive intestinal polypeptide receptor 2 from Mus musculus (Mouse).